Reading from the N-terminus, the 455-residue chain is Trigger factor (455 aa).

The region spanning 169 to 262 is the PPIase FKBP-type domain; it reads GDVAIVDYEG…VKELKAKELP (94 aa).

Belongs to the FKBP-type PPIase family. Tig subfamily.

It is found in the cytoplasm. It catalyses the reaction [protein]-peptidylproline (omega=180) = [protein]-peptidylproline (omega=0). Functionally, involved in protein export. Acts as a chaperone by maintaining the newly synthesized protein in an open conformation. Functions as a peptidyl-prolyl cis-trans isomerase. The chain is Trigger factor from Rippkaea orientalis (strain PCC 8801 / RF-1) (Cyanothece sp. (strain PCC 8801)).